A 249-amino-acid polypeptide reads, in one-letter code: Pyridoxine 5'-phosphate synthase (249 aa).

Asparagine 7 provides a ligand contact to 3-amino-2-oxopropyl phosphate. Aspartate 9 to histidine 10 provides a ligand contact to 1-deoxy-D-xylulose 5-phosphate. Arginine 18 is a 3-amino-2-oxopropyl phosphate binding site. Catalysis depends on histidine 43, which acts as the Proton acceptor. Positions 45 and 50 each coordinate 1-deoxy-D-xylulose 5-phosphate. Catalysis depends on glutamate 70, which acts as the Proton acceptor. Threonine 100 serves as a coordination point for 1-deoxy-D-xylulose 5-phosphate. Histidine 190 (proton donor) is an active-site residue. 3-amino-2-oxopropyl phosphate is bound by residues glycine 191 and glycine 212–histidine 213.

It belongs to the PNP synthase family. In terms of assembly, homooctamer; tetramer of dimers.

The protein resides in the cytoplasm. The enzyme catalyses 3-amino-2-oxopropyl phosphate + 1-deoxy-D-xylulose 5-phosphate = pyridoxine 5'-phosphate + phosphate + 2 H2O + H(+). It participates in cofactor biosynthesis; pyridoxine 5'-phosphate biosynthesis; pyridoxine 5'-phosphate from D-erythrose 4-phosphate: step 5/5. In terms of biological role, catalyzes the complicated ring closure reaction between the two acyclic compounds 1-deoxy-D-xylulose-5-phosphate (DXP) and 3-amino-2-oxopropyl phosphate (1-amino-acetone-3-phosphate or AAP) to form pyridoxine 5'-phosphate (PNP) and inorganic phosphate. The polypeptide is Pyridoxine 5'-phosphate synthase (Synechococcus sp. (strain CC9605)).